A 66-amino-acid polypeptide reads, in one-letter code: Phylloseptin-H7 (66 aa).

Positions 1 to 22 are cleaved as a signal peptide; that stretch reads MAFLKKSLFLVLFLGLVSLSIC. Residues 23 to 44 constitute a propeptide that is removed on maturation; it reads EEEKRETEEEENDQEEDDKSEE. The tract at residues 25–44 is disordered; it reads EKRETEEEENDQEEDDKSEE. Positions 30-41 are enriched in acidic residues; sequence EEEENDQEEDDK. L65 bears the Leucine amide mark.

As to expression, expressed by the skin glands.

The protein localises to the secreted. Has antimicrobial activity. This Pithecopus hypochondrialis (Orange-legged leaf frog) protein is Phylloseptin-H7.